A 157-amino-acid polypeptide reads, in one-letter code: SsrA-binding protein (157 aa).

Residues 134–151 (HDKRETEKKRDWSKEKGR) are compositionally biased toward basic and acidic residues. Positions 134 to 157 (HDKRETEKKRDWSKEKGRLMRAKG) are disordered.

Belongs to the SmpB family.

It is found in the cytoplasm. In terms of biological role, required for rescue of stalled ribosomes mediated by trans-translation. Binds to transfer-messenger RNA (tmRNA), required for stable association of tmRNA with ribosomes. tmRNA and SmpB together mimic tRNA shape, replacing the anticodon stem-loop with SmpB. tmRNA is encoded by the ssrA gene; the 2 termini fold to resemble tRNA(Ala) and it encodes a 'tag peptide', a short internal open reading frame. During trans-translation Ala-aminoacylated tmRNA acts like a tRNA, entering the A-site of stalled ribosomes, displacing the stalled mRNA. The ribosome then switches to translate the ORF on the tmRNA; the nascent peptide is terminated with the 'tag peptide' encoded by the tmRNA and targeted for degradation. The ribosome is freed to recommence translation, which seems to be the essential function of trans-translation. This is SsrA-binding protein from Rhodopseudomonas palustris (strain BisA53).